Here is a 1331-residue protein sequence, read N- to C-terminus: Alpha,alpha-trehalose-phosphate synthase [UDP-forming] 1 (1331 aa).

Polar residues predominate over residues 1-13; it reads MTDTATGVHSNAN. 3 disordered regions span residues 1–50, 71–118, and 1312–1331; these read MTDT…DNDP, TGKE…SGQL, and PMDQ…SFGN. The span at 39–50 shows a compositional bias: basic and acidic residues; sequence DPFDRPKNDNDP. Acidic residues predominate over residues 77–98; sequence LDESDDMTENEDHDEMANEDDG. The span at 102–112 shows a compositional bias: basic and acidic residues; the sequence is NEKKVETRKMD. Positions 1318 to 1331 are enriched in polar residues; sequence SSTLGASLGTSFGN.

It in the N-terminal section; belongs to the glycosyltransferase 20 family. The protein in the C-terminal section; belongs to the gob-1 trehalose phosphatase family.

The enzyme catalyses D-glucose 6-phosphate + UDP-alpha-D-glucose = alpha,alpha-trehalose 6-phosphate + UDP + H(+). Catalyzes the production of trehalose from glucose-6-phosphate and UDP-alpha-D-glucose in a 2 step process. The chain is Alpha,alpha-trehalose-phosphate synthase [UDP-forming] 1 (tps-1) from Caenorhabditis elegans.